We begin with the raw amino-acid sequence, 717 residues long: Pentatricopeptide repeat-containing protein At1g53600, mitochondrial (717 aa).

A mitochondrion-targeting transit peptide spans 1–47; the sequence is MVMRPISNKGLIYRHNICLRCNSTLAVSNHEPITQKTRNFLETTTTS. PPR repeat units lie at residues 49 to 79, 80 to 110, 111 to 142, 143 to 173, 176 to 206, 207 to 241, 242 to 272, 274 to 308, 309 to 339, 340 to 374, 375 to 401, 402 to 436, 437 to 471, 472 to 502, 503 to 537, 538 to 568, and 574 to 604; these read AIFQ…MSNR, SIVS…MPVR, VTTS…IPEK, NAVS…TPVK, DSVA…MAVK, EVVS…NVIT, WTAM…GDVK, NSNT…PLEF, DLFL…MKNK, DSVS…DMVS, WTDM…MPEK, DNIT…EVCP, NSYT…NIVN, DLSV…ISEP, NIVS…GKEP, NGVT…MKSS, and GPDH…MPCK. A type E motif region spans residues 609–684; the sequence is VWGSLLSASK…DPGSSWIILK (76 aa). A type E(+) motif region spans residues 685–715; the sequence is GEVHNFLAGDESQLNLEEIGFTLKMIRKEME.

This sequence belongs to the PPR family. PCMP-E subfamily.

It is found in the mitochondrion. The protein is Pentatricopeptide repeat-containing protein At1g53600, mitochondrial (PCMP-E63) of Arabidopsis thaliana (Mouse-ear cress).